We begin with the raw amino-acid sequence, 368 residues long: Cobalt-precorrin-5B C(1)-methyltransferase (368 aa).

Belongs to the CbiD family.

It catalyses the reaction Co-precorrin-5B + S-adenosyl-L-methionine = Co-precorrin-6A + S-adenosyl-L-homocysteine. It functions in the pathway cofactor biosynthesis; adenosylcobalamin biosynthesis; cob(II)yrinate a,c-diamide from sirohydrochlorin (anaerobic route): step 6/10. Its function is as follows. Catalyzes the methylation of C-1 in cobalt-precorrin-5B to form cobalt-precorrin-6A. The sequence is that of Cobalt-precorrin-5B C(1)-methyltransferase from Synechococcus sp. (strain CC9605).